A 420-amino-acid chain; its full sequence is Gamma-glutamyl phosphate reductase (420 aa).

It belongs to the gamma-glutamyl phosphate reductase family.

It is found in the cytoplasm. The enzyme catalyses L-glutamate 5-semialdehyde + phosphate + NADP(+) = L-glutamyl 5-phosphate + NADPH + H(+). It functions in the pathway amino-acid biosynthesis; L-proline biosynthesis; L-glutamate 5-semialdehyde from L-glutamate: step 2/2. Functionally, catalyzes the NADPH-dependent reduction of L-glutamate 5-phosphate into L-glutamate 5-semialdehyde and phosphate. The product spontaneously undergoes cyclization to form 1-pyrroline-5-carboxylate. This chain is Gamma-glutamyl phosphate reductase, found in Laribacter hongkongensis (strain HLHK9).